We begin with the raw amino-acid sequence, 273 residues long: Multivesicular body subunit 12A (273 aa).

The 143-residue stretch at 9 to 151 (GMPLAGLAWS…GFAIWCRKAK (143 aa)) folds into the MABP domain. Thr-130 carries the phosphothreonine modification. The interval 154-186 (RPVPKPRALSRDVRDLSLDSPGQPSKGGFPERT) is disordered. The short motif at 155 to 160 (PVPKPR) is the SH3-binding element. Residues Ser-163, Ser-170, Ser-195, and Ser-202 each carry the phosphoserine modification. Residues 192–273 (SRASTLRRND…AAARLPPSVS (82 aa)) form an interaction with TSG101, VPS37B and VPS28 region. Tyr-204 is subject to Phosphotyrosine. Ser-207 is modified (phosphoserine). Residues 215-265 (MDGVPFTLHPRFEGKSCGPLAFSAFADLTIKSLADIEAEYNYGFVVEKTAA) form the UMA domain.

Belongs to the MVB12 family. Component of the ESCRT-I complex (endosomal sorting complex required for transport I) which consists of TSG101, VPS28, a VPS37 protein (VPS37A to -D) and MVB12A or MVB12B in a 1:1:1:1 stoichiometry. Interacts with CD2AP and CIN85/SH3KBP1. Interacts with CD2AP (via one of the SH3 domains). Interacts with TSG101; the association appears to be mediated by the TSG101-VPS37 binary subcomplex. Interacts with VPS28. Interacts with VPS37B; the association appears to be mediated by the TSG101-VPS37 binary subcomplex. Interacts with VPS37C; the association appears to be mediated by the TSG101-VPS37 binary subcomplex. Interacts with VPS37D; the association appears to be mediated by the TSG101-VPS37 binary subcomplex. Interacts with CEP55. Post-translationally, phosphorylated on Tyr-204 upon EGF stimulation. Phosphorylation is required for interaction with CD2AP and CIN85/SH3KBP1.

The protein localises to the cytoplasm. Its subcellular location is the cytoskeleton. It is found in the nucleus. It localises to the endosome. The protein resides in the microtubule organizing center. The protein localises to the centrosome. Its subcellular location is the late endosome membrane. Its function is as follows. Component of the ESCRT-I complex, a regulator of vesicular trafficking process. Required for the sorting of endocytic ubiquitinated cargos into multivesicular bodies. May be involved in the ligand-mediated internalization and down-regulation of EGF receptor. The chain is Multivesicular body subunit 12A (MVB12A) from Bos taurus (Bovine).